The following is a 169-amino-acid chain: Cytochrome c oxidase subunit 4 isoform 1, mitochondrial (169 aa).

The transit peptide at 1 to 22 (MLATRALSLIGKRAISTSVCLR) directs the protein to the mitochondrion. The Mitochondrial matrix portion of the chain corresponds to 23 to 98 (AHGSVVKSED…SFAEMNKGTN (76 aa)). K29 is modified (N6-acetyllysine; alternate). K29 is modified (N6-succinyllysine; alternate). The residue at position 53 (K53) is an N6-acetyllysine. Phosphoserine is present on residues S56 and S58. N6-acetyllysine; alternate is present on K60. N6-succinyllysine; alternate is present on K60. The residue at position 67 (K67) is an N6-acetyllysine. A helical membrane pass occupies residues 99-124 (EWKTVVGLAMFFIGFTALVLIWEKSY). At 125 to 169 (VYGPIPHTFDRDWVAMQTKRMLDMKVNPIQGFSAKWDYNKNEWKK) the chain is on the mitochondrial intermembrane side.

It belongs to the cytochrome c oxidase IV family. Component of the cytochrome c oxidase (complex IV, CIV), a multisubunit enzyme composed of 14 subunits. The complex is composed of a catalytic core of 3 subunits MT-CO1, MT-CO2 and MT-CO3, encoded in the mitochondrial DNA, and 11 supernumerary subunits COX4I, COX5A, COX5B, COX6A, COX6B, COX6C, COX7A, COX7B, COX7C, COX8 and NDUFA4, which are encoded in the nuclear genome. The complex exists as a monomer or a dimer and forms supercomplexes (SCs) in the inner mitochondrial membrane with NADH-ubiquinone oxidoreductase (complex I, CI) and ubiquinol-cytochrome c oxidoreductase (cytochrome b-c1 complex, complex III, CIII), resulting in different assemblies (supercomplex SCI(1)III(2)IV(1) and megacomplex MCI(2)III(2)IV(2)). Interacts with PHB2; the interaction decreases in absence of SPHK2. Interacts with AFG1L. Interacts with ABCB7; this interaction allows the regulation of cellular iron homeostasis and cellular reactive oxygen species (ROS) levels in cardiomyocytes. Interacts with FLVCR2; this interaction occurs in the absence of heme and is disrupted upon heme binding. Interacts with IRGC.

Its subcellular location is the mitochondrion inner membrane. It participates in energy metabolism; oxidative phosphorylation. Component of the cytochrome c oxidase, the last enzyme in the mitochondrial electron transport chain which drives oxidative phosphorylation. The respiratory chain contains 3 multisubunit complexes succinate dehydrogenase (complex II, CII), ubiquinol-cytochrome c oxidoreductase (cytochrome b-c1 complex, complex III, CIII) and cytochrome c oxidase (complex IV, CIV), that cooperate to transfer electrons derived from NADH and succinate to molecular oxygen, creating an electrochemical gradient over the inner membrane that drives transmembrane transport and the ATP synthase. Cytochrome c oxidase is the component of the respiratory chain that catalyzes the reduction of oxygen to water. Electrons originating from reduced cytochrome c in the intermembrane space (IMS) are transferred via the dinuclear copper A center (CU(A)) of subunit 2 and heme A of subunit 1 to the active site in subunit 1, a binuclear center (BNC) formed by heme A3 and copper B (CU(B)). The BNC reduces molecular oxygen to 2 water molecules using 4 electrons from cytochrome c in the IMS and 4 protons from the mitochondrial matrix. The chain is Cytochrome c oxidase subunit 4 isoform 1, mitochondrial (Cox4i1) from Rattus norvegicus (Rat).